The primary structure comprises 481 residues: Dihydrolipoyl dehydrogenase (481 aa).

FAD-binding positions include 34 to 42 (EREHMGGIC) and Lys-51. Cys-42 and Cys-47 are oxidised to a cystine. NAD(+) contacts are provided by residues 195 to 199 (GSGAI), Glu-218, and 284 to 287 (AVGV). Positions 326 and 334 each coordinate FAD. His-460 (proton acceptor) is an active-site residue.

This sequence belongs to the class-I pyridine nucleotide-disulfide oxidoreductase family. In terms of assembly, homodimer. It depends on FAD as a cofactor.

It is found in the cytoplasm. The catalysed reaction is N(6)-[(R)-dihydrolipoyl]-L-lysyl-[protein] + NAD(+) = N(6)-[(R)-lipoyl]-L-lysyl-[protein] + NADH + H(+). Lipoamide dehydrogenase is a component of the alpha-ketoacid dehydrogenase complexes. This Rhizobium etli (strain ATCC 51251 / DSM 11541 / JCM 21823 / NBRC 15573 / CFN 42) protein is Dihydrolipoyl dehydrogenase (lpdA).